The primary structure comprises 309 residues: 4-hydroxy-3-methylbut-2-enyl diphosphate reductase (309 aa).

Cys12 is a [4Fe-4S] cluster binding site. (2E)-4-hydroxy-3-methylbut-2-enyl diphosphate contacts are provided by His41 and His74. Residues His41 and His74 each coordinate dimethylallyl diphosphate. Residues His41 and His74 each contribute to the isopentenyl diphosphate site. Position 96 (Cys96) interacts with [4Fe-4S] cluster. His124 is a (2E)-4-hydroxy-3-methylbut-2-enyl diphosphate binding site. His124 provides a ligand contact to dimethylallyl diphosphate. Position 124 (His124) interacts with isopentenyl diphosphate. The active-site Proton donor is the Glu126. Residue Thr167 coordinates (2E)-4-hydroxy-3-methylbut-2-enyl diphosphate. Cys197 is a [4Fe-4S] cluster binding site. Residues Ser225, Ser226, Asn227, and Ser269 each coordinate (2E)-4-hydroxy-3-methylbut-2-enyl diphosphate. Residues Ser225, Ser226, Asn227, and Ser269 each coordinate dimethylallyl diphosphate. Residues Ser225, Ser226, Asn227, and Ser269 each contribute to the isopentenyl diphosphate site.

The protein belongs to the IspH family. [4Fe-4S] cluster serves as cofactor.

It catalyses the reaction isopentenyl diphosphate + 2 oxidized [2Fe-2S]-[ferredoxin] + H2O = (2E)-4-hydroxy-3-methylbut-2-enyl diphosphate + 2 reduced [2Fe-2S]-[ferredoxin] + 2 H(+). It carries out the reaction dimethylallyl diphosphate + 2 oxidized [2Fe-2S]-[ferredoxin] + H2O = (2E)-4-hydroxy-3-methylbut-2-enyl diphosphate + 2 reduced [2Fe-2S]-[ferredoxin] + 2 H(+). It participates in isoprenoid biosynthesis; dimethylallyl diphosphate biosynthesis; dimethylallyl diphosphate from (2E)-4-hydroxy-3-methylbutenyl diphosphate: step 1/1. The protein operates within isoprenoid biosynthesis; isopentenyl diphosphate biosynthesis via DXP pathway; isopentenyl diphosphate from 1-deoxy-D-xylulose 5-phosphate: step 6/6. Catalyzes the conversion of 1-hydroxy-2-methyl-2-(E)-butenyl 4-diphosphate (HMBPP) into a mixture of isopentenyl diphosphate (IPP) and dimethylallyl diphosphate (DMAPP). Acts in the terminal step of the DOXP/MEP pathway for isoprenoid precursor biosynthesis. This is 4-hydroxy-3-methylbut-2-enyl diphosphate reductase from Colwellia psychrerythraea (strain 34H / ATCC BAA-681) (Vibrio psychroerythus).